The sequence spans 226 residues: Transmembrane protein 204 (226 aa).

The Cytoplasmic portion of the chain corresponds to 1-5 (MTVRK). A helical transmembrane segment spans residues 6–26 (VVATAVLVALVSLVLNNAAAF). At 27 to 103 (TPNWVYQTLE…LQFDMMRACN (77 aa)) the chain is on the extracellular side. The helical transmembrane segment at 104–124 (LVATAALAAGQLTFVLGLTGL) threads the bilayer. Residues 125–136 (PLLSPDAQCWEE) lie on the Cytoplasmic side of the membrane. Residues 137-157 (AMAAAFQLASFVLVIGLVTFY) form a helical membrane-spanning segment. Over 158–170 (RIGPYTSLSWSCY) the chain is Extracellular. A helical transmembrane segment spans residues 171–191 (LNIGACLLATLAAAMLIWNVL). Residues 192-226 (HRREDCTAPRVIVISRSLTARFRRGLDNDYVESPC) lie on the Cytoplasmic side of the membrane.

It is found in the cell junction. Its subcellular location is the adherens junction. The protein resides in the cell membrane. Functionally, can influence paracellular permeability. Appears to be involved in cell-cell interactions through adherens. The polypeptide is Transmembrane protein 204 (TMEM204) (Bos taurus (Bovine)).